A 641-amino-acid polypeptide reads, in one-letter code: Sodium-dependent nutrient amino acid transporter 1 (641 aa).

A disordered region spans residues 1–38; that stretch reads MELKGVQPSNGSSNGSGNGATNAASTEKTDAEKPTAER. Residues 1–40 lie on the Cytoplasmic side of the membrane; it reads MELKGVQPSNGSSNGSGNGATNAASTEKTDAEKPTAERTN. Over residues 9-26 the composition is skewed to low complexity; it reads SNGSSNGSGNGATNAAST. Over residues 27-36 the composition is skewed to basic and acidic residues; it reads EKTDAEKPTA. Transmembrane regions (helical) follow at residues 41 to 61, 74 to 94, and 111 to 131; these read WGNG…LGNV, GAFL…MYYL, and SVVP…ICII. 2 N-linked (GlcNAc...) asparagine glycosylation sites follow: Asn185 and Asn190. Transmembrane regions (helical) follow at residues 229–249, 258–278, 307–327, 341–361, 401–421, 447–467, 474–494, 516–536, and 552–572; these read PDWK…LVIM, AAYF…IRAV, AVVQ…MFAS, IVTT…FAIL, LFSV…IVAL, VCGF…ILTL, TYVV…VYGL, CWSF…MVTI, and IAGW…GLWY.

Belongs to the sodium:neurotransmitter symporter (SNF) (TC 2.A.22) family. As to expression, in larvae, weak specific expression in the anterior midgut just proximal to the gastric caeca reproductive rudiments, common ureters of the Malpighian tubules, and distal swollen portion of the anterior pair of Malpighian tubules. Expression is also seen in the imaginal disks of the head; brain hemispheres and the ventral ganglion. Stronger expression in the posterior midgut.

Its subcellular location is the membrane. Unusual broad substrate spectrum amino acid:sodium cotransporter that promotes absorption of the D isomers of essential amino acids. Neutral amino acids are the preferred substrates, especially methionine and phenylalanine. The sequence is that of Sodium-dependent nutrient amino acid transporter 1 (NAAT1) from Drosophila melanogaster (Fruit fly).